The following is a 226-amino-acid chain: Uracil-DNA glycosylase (226 aa).

Aspartate 64 (proton acceptor) is an active-site residue.

The protein belongs to the uracil-DNA glycosylase (UDG) superfamily. UNG family.

It is found in the cytoplasm. The enzyme catalyses Hydrolyzes single-stranded DNA or mismatched double-stranded DNA and polynucleotides, releasing free uracil.. Excises uracil residues from the DNA which can arise as a result of misincorporation of dUMP residues by DNA polymerase or due to deamination of cytosine. This chain is Uracil-DNA glycosylase, found in Vibrio campbellii (strain ATCC BAA-1116).